Here is a 131-residue protein sequence, read N- to C-terminus: Sulfurtransferase TusD (131 aa).

The active-site Cysteine persulfide intermediate is C81.

Belongs to the DsrE/TusD family. As to quaternary structure, heterohexamer, formed by a dimer of trimers. The hexameric TusBCD complex contains 2 copies each of TusB, TusC and TusD. The TusBCD complex interacts with TusE.

It localises to the cytoplasm. Part of a sulfur-relay system required for 2-thiolation of 5-methylaminomethyl-2-thiouridine (mnm(5)s(2)U) at tRNA wobble positions. Accepts sulfur from TusA and transfers it in turn to TusE. This is Sulfurtransferase TusD from Yersinia pseudotuberculosis serotype O:1b (strain IP 31758).